A 586-amino-acid polypeptide reads, in one-letter code: Succinate dehydrogenase flavoprotein subunit (586 aa).

Residues 10 to 15 (GGGLAG) and 33 to 48 (SIVP…AQGG) contribute to the FAD site. Residue His41 is modified to Tele-8alpha-FAD histidine. His236 and Ser250 together coordinate substrate. Arg285 serves as the catalytic Proton acceptor. Residue His352 participates in substrate binding. Glu376 contributes to the FAD binding site. Residue Arg386 coordinates substrate. Residue 391–392 (SL) participates in FAD binding.

It belongs to the FAD-dependent oxidoreductase 2 family. FRD/SDH subfamily. In B.subtilis succinate dehydrogenase forms part of an enzyme complex containing three subunits: a flavoprotein, an iron-sulfur protein and cytochrome b-558. Interacts with FloT. FAD is required as a cofactor.

It localises to the cell membrane. It is found in the membrane raft. The enzyme catalyses a quinone + succinate = fumarate + a quinol. The protein operates within carbohydrate metabolism; tricarboxylic acid cycle; fumarate from succinate (bacterial route): step 1/1. This is Succinate dehydrogenase flavoprotein subunit (sdhA) from Bacillus subtilis (strain 168).